A 680-amino-acid chain; its full sequence is Heterokaryon incompatibility protein 6, OR allele (680 aa).

Involved in the non-self-recognition during asexual growth of N.crassa. This process involves restriction of heterokaryon formation via genetic differences at 11 het loci, including mating type. The sequence is that of Heterokaryon incompatibility protein 6, OR allele (het-6) from Neurospora crassa (strain ATCC 24698 / 74-OR23-1A / CBS 708.71 / DSM 1257 / FGSC 987).